The chain runs to 151 residues: Large ribosomal subunit protein uL22 (151 aa).

The segment covering 1-18 (MARINYSINGDPETTSKA) has biased composition (polar residues). Positions 1-23 (MARINYSINGDPETTSKAMGSEL) are disordered.

The protein belongs to the universal ribosomal protein uL22 family. In terms of assembly, part of the 50S ribosomal subunit.

Its function is as follows. This protein binds specifically to 23S rRNA. It makes multiple contacts with different domains of the 23S rRNA in the assembled 50S subunit and ribosome. In terms of biological role, the globular domain of the protein is located near the polypeptide exit tunnel on the outside of the subunit, while an extended beta-hairpin is found that lines the wall of the exit tunnel in the center of the 70S ribosome. The protein is Large ribosomal subunit protein uL22 of Methanosarcina acetivorans (strain ATCC 35395 / DSM 2834 / JCM 12185 / C2A).